The sequence spans 835 residues: Leucine--tRNA ligase (835 aa).

Positions 41–52 match the 'HIGH' region motif; that stretch reads PYPSGQGLHVGH. The short motif at 611–615 is the 'KMSKS' region element; sequence KMSKS. ATP is bound at residue Lys-614.

It belongs to the class-I aminoacyl-tRNA synthetase family.

It localises to the cytoplasm. The catalysed reaction is tRNA(Leu) + L-leucine + ATP = L-leucyl-tRNA(Leu) + AMP + diphosphate. The chain is Leucine--tRNA ligase from Elusimicrobium minutum (strain Pei191).